The following is a 411-amino-acid chain: Putative nickel insertion protein (411 aa).

The protein belongs to the LarC family.

The protein is Putative nickel insertion protein of Methanothermobacter thermautotrophicus (strain ATCC 29096 / DSM 1053 / JCM 10044 / NBRC 100330 / Delta H) (Methanobacterium thermoautotrophicum).